A 388-amino-acid polypeptide reads, in one-letter code: Succinate--CoA ligase [ADP-forming] subunit beta (388 aa).

The ATP-grasp domain maps to 9 to 244 (KDLLVSYDIA…PSQENVRDVL (236 aa)). ATP-binding positions include Lys46, 53–55 (GRG), Val102, and Glu107. Mg(2+) contacts are provided by Asn199 and Asp213. Residues Asn264 and 321–323 (GIM) each bind substrate.

Belongs to the succinate/malate CoA ligase beta subunit family. In terms of assembly, heterotetramer of two alpha and two beta subunits. Requires Mg(2+) as cofactor.

It carries out the reaction succinate + ATP + CoA = succinyl-CoA + ADP + phosphate. It catalyses the reaction GTP + succinate + CoA = succinyl-CoA + GDP + phosphate. The protein operates within carbohydrate metabolism; tricarboxylic acid cycle; succinate from succinyl-CoA (ligase route): step 1/1. Functionally, succinyl-CoA synthetase functions in the citric acid cycle (TCA), coupling the hydrolysis of succinyl-CoA to the synthesis of either ATP or GTP and thus represents the only step of substrate-level phosphorylation in the TCA. The beta subunit provides nucleotide specificity of the enzyme and binds the substrate succinate, while the binding sites for coenzyme A and phosphate are found in the alpha subunit. The polypeptide is Succinate--CoA ligase [ADP-forming] subunit beta (Chlamydia caviae (strain ATCC VR-813 / DSM 19441 / 03DC25 / GPIC) (Chlamydophila caviae)).